The primary structure comprises 1150 residues: Voltage-dependent calcium channel subunit alpha-2/delta-2 (1150 aa).

A signal peptide spans methionine 1–threonine 18. A disordered region spans residues methionine 1–proline 41. Residues alanine 19–glycine 1113 lie on the Extracellular side of the membrane. Residues aspartate 291–leucine 469 enclose the VWFA domain. A divalent metal cation contacts are provided by aspartate 297, serine 299, and serine 301. The MIDAS-like motif motif lies at aspartate 297–serine 301. Asparagine 386, asparagine 418, asparagine 507, asparagine 540, asparagine 624, and asparagine 861 each carry an N-linked (GlcNAc...) asparagine glycan. Cysteine 443 and cysteine 1098 are oxidised to a cystine. The Cache domain occupies tryptophan 485–proline 574. The helical transmembrane segment at alanine 1114–leucine 1134 threads the bilayer. Over proline 1135 to leucine 1150 the chain is Cytoplasmic.

This sequence belongs to the calcium channel subunit alpha-2/delta family. Dimer formed of alpha-2-2 and delta-2 chains; disulfide-linked. Voltage-dependent calcium channels are multisubunit complexes, consisting of alpha-1 (CACNA1), alpha-2 (CACNA2D), beta (CACNB) and delta (CACNA2D) subunits in a 1:1:1:1 ratio. In terms of processing, may be proteolytically processed into subunits alpha-2-2 and delta-2 that are disulfide-linked. It is however unclear whether such cleavage really takes place in vivo and has a functional role. In terms of tissue distribution, predominantly present in cerebellar cortex. Present in various lung tumor cell lines, while it is absent in normal lung (at protein level). Highly expressed in heart, lung, testis, pancreas and skeletal muscle. Also expressed in kidney, liver, placenta and brain.

It is found in the membrane. The alpha-2/delta subunit of voltage-dependent calcium channels regulates calcium current density and activation/inactivation kinetics of the calcium channel. Acts as a regulatory subunit for P/Q-type calcium channel (CACNA1A), N-type (CACNA1B), L-type (CACNA1C OR CACNA1D) and possibly T-type (CACNA1G). Overexpression induces apoptosis. In Homo sapiens (Human), this protein is Voltage-dependent calcium channel subunit alpha-2/delta-2 (CACNA2D2).